The primary structure comprises 134 residues: Natriuretic peptides B (134 aa).

An N-terminal signal peptide occupies residues 1–26 (MDPQTAPSRALLLLLFLHLAFLGGRS). Serine 41 is a glycosylation site (O-linked (Xyl...) (chondroitin sulfate) serine). O-linked (HexNAc...) threonine; Partial glycosylation occurs at threonine 62. O-linked (HexNAc...) serine glycans are attached at residues serine 63 and serine 70. Threonine 74 is a glycosylation site (O-linked (HexNAc...) threonine). The O-linked (HexNAc...) serine glycan is linked to serine 79. O-linked (HexNAc...) threonine; Partial glycosylation is present at threonine 84. Threonine 97 carries O-linked (HexNAc...) threonine glycosylation. A disulfide bridge connects residues cysteine 112 and cysteine 128.

The protein belongs to the natriuretic peptide family. In terms of processing, the precursor molecule is proteolytically cleaved by the endoproteases FURIN or CORIN at Arg-102 to produce brain natriuretic peptide 32 and NT-proBNP. This likely occurs after it has been secreted into the blood, either during circulation or in the target cells. CORIN also cleaves the precursor molecule at additional residues including Arg-99 and possibly Lys-105. In patients with heart failure, processing and degradation of natriuretic peptides B occurs but is delayed, possibly due to a decrease in enzyme level or activity of CORIN and DPP4. Post-translationally, undergoes further proteolytic cleavage by various proteases such as DPP4, MME and possibly FAP, to give rise to a variety of shorter peptides. Cleaved at Pro-104 by the prolyl endopeptidase FAP (seprase) activity (in vitro). Degraded by IDE. During IDE degradation, the resulting products initially increase the activation of NPR1 and can also stimulate NPR2 to produce cGMP before the fragments are completely degraded and inactivated by IDE (in vitro). O-glycosylated on at least seven residues. In cardiomyocytes, glycosylation at Thr-97 is essential for the stability and processing of the extracellular natriuretic peptides B. Glycosylation, especially at Thr-97, may also be important for brain natriuretic peptide 32 stability and/or extracellular distribution. Glycosylation at Thr-97 appears to inhibit FURIN- or CORIN-mediated proteolytic processing, at least in HEK293 cells. In terms of tissue distribution, detected in the cardiac atria (at protein level). Detected in the kidney distal tubular cells (at protein level).

The protein localises to the secreted. Cardiac hormone that plays a key role in mediating cardio-renal homeostasis. May also function as a paracrine antifibrotic factor in the heart. Acts by specifically binding and stimulating NPR1 to produce cGMP, which in turn activates effector proteins that drive various biological responses. Involved in regulating the extracellular fluid volume and maintaining the fluid-electrolyte balance through natriuresis, diuresis, vasorelaxation, and inhibition of renin and aldosterone secretion. Binds the clearance receptor NPR3. Its function is as follows. May affect cardio-renal homeostasis. Able to promote the production of cGMP although its potency is very low compared to brain natriuretic peptide 32. In terms of biological role, may have a role in cardio-renal homeostasis. Able to promote the production of cGMP. The protein is Natriuretic peptides B (NPPB) of Homo sapiens (Human).